A 175-amino-acid polypeptide reads, in one-letter code: Epididymal-specific lipocalin-8 (175 aa).

A signal peptide spans 1-22 (MEARLLSNVCGFFLVFLLQAES). Asn66 and Asn74 each carry an N-linked (GlcNAc...) asparagine glycan. Cys79 and Cys166 are oxidised to a cystine.

It belongs to the calycin superfamily. Lipocalin family. Predominantly expressed in epididymis.

The protein resides in the secreted. Its function is as follows. May play a role in male fertility. May act as a retinoid carrier protein within the epididymis. The protein is Epididymal-specific lipocalin-8 (Lcn8) of Mus musculus (Mouse).